A 122-amino-acid chain; its full sequence is Large ribosomal subunit protein uL22c (122 aa).

The protein belongs to the universal ribosomal protein uL22 family. In terms of assembly, part of the 50S ribosomal subunit.

It is found in the plastid. The protein resides in the chloroplast. Functionally, this protein binds specifically to 23S rRNA. The globular domain of the protein is located near the polypeptide exit tunnel on the outside of the subunit, while an extended beta-hairpin is found that lines the wall of the exit tunnel in the center of the 70S ribosome. This is Large ribosomal subunit protein uL22c (rpl22) from Adiantum capillus-veneris (Maidenhair fern).